The chain runs to 228 residues: 2-C-methyl-D-erythritol 4-phosphate cytidylyltransferase (228 aa).

The protein belongs to the IspD/TarI cytidylyltransferase family. IspD subfamily.

The enzyme catalyses 2-C-methyl-D-erythritol 4-phosphate + CTP + H(+) = 4-CDP-2-C-methyl-D-erythritol + diphosphate. It participates in isoprenoid biosynthesis; isopentenyl diphosphate biosynthesis via DXP pathway; isopentenyl diphosphate from 1-deoxy-D-xylulose 5-phosphate: step 2/6. In terms of biological role, catalyzes the formation of 4-diphosphocytidyl-2-C-methyl-D-erythritol from CTP and 2-C-methyl-D-erythritol 4-phosphate (MEP). In Halalkalibacterium halodurans (strain ATCC BAA-125 / DSM 18197 / FERM 7344 / JCM 9153 / C-125) (Bacillus halodurans), this protein is 2-C-methyl-D-erythritol 4-phosphate cytidylyltransferase.